Here is a 161-residue protein sequence, read N- to C-terminus: Peptidyl-prolyl cis-trans isomerase-like 1 (161 aa).

Positions Met1–Val155 constitute a PPIase cyclophilin-type domain.

This sequence belongs to the cyclophilin-type PPIase family. PPIL1 subfamily.

It carries out the reaction [protein]-peptidylproline (omega=180) = [protein]-peptidylproline (omega=0). PPIases accelerate the folding of proteins. It catalyzes the cis-trans isomerization of proline imidic peptide bonds in oligopeptides. The polypeptide is Peptidyl-prolyl cis-trans isomerase-like 1 (cyp1) (Aspergillus oryzae (strain ATCC 42149 / RIB 40) (Yellow koji mold)).